A 254-amino-acid chain; its full sequence is Homeobox protein Dlx4b (254 aa).

Residues 129-188 (IRKPRTIYSSVQLQALHQRFQQTQYLALPERADLAAKLGLTQTQVKIWFQNKRSKYKKIM) constitute a DNA-binding region (homeobox).

This sequence belongs to the distal-less homeobox family.

The protein localises to the nucleus. During larvae development, may be important for neurocranium morphogenesis. The chain is Homeobox protein Dlx4b (dlx4b) from Danio rerio (Zebrafish).